A 439-amino-acid chain; its full sequence is Tubulin beta chain (439 aa).

Gln11, Glu69, Ser138, Gly142, Thr143, Gly144, Asn204, and Asn226 together coordinate GTP. Position 69 (Glu69) interacts with Mg(2+).

This sequence belongs to the tubulin family. Dimer of alpha and beta chains. A typical microtubule is a hollow water-filled tube with an outer diameter of 25 nm and an inner diameter of 15 nM. Alpha-beta heterodimers associate head-to-tail to form protofilaments running lengthwise along the microtubule wall with the beta-tubulin subunit facing the microtubule plus end conferring a structural polarity. Microtubules usually have 13 protofilaments but different protofilament numbers can be found in some organisms and specialized cells. The cofactor is Mg(2+).

The protein localises to the cytoplasm. Its subcellular location is the cytoskeleton. Functionally, tubulin is the major constituent of microtubules, a cylinder consisting of laterally associated linear protofilaments composed of alpha- and beta-tubulin heterodimers. Microtubules grow by the addition of GTP-tubulin dimers to the microtubule end, where a stabilizing cap forms. Below the cap, tubulin dimers are in GDP-bound state, owing to GTPase activity of alpha-tubulin. This Encephalitozoon intestinalis (Microsporidian parasite) protein is Tubulin beta chain (TUB2).